A 446-amino-acid chain; its full sequence is ATP-dependent protease ATPase subunit HslU (446 aa).

ATP-binding positions include V18, 60–65 (GVGKTE), D259, E324, and R396.

This sequence belongs to the ClpX chaperone family. HslU subfamily. In terms of assembly, a double ring-shaped homohexamer of HslV is capped on each side by a ring-shaped HslU homohexamer. The assembly of the HslU/HslV complex is dependent on binding of ATP.

The protein localises to the cytoplasm. In terms of biological role, ATPase subunit of a proteasome-like degradation complex; this subunit has chaperone activity. The binding of ATP and its subsequent hydrolysis by HslU are essential for unfolding of protein substrates subsequently hydrolyzed by HslV. HslU recognizes the N-terminal part of its protein substrates and unfolds these before they are guided to HslV for hydrolysis. The polypeptide is ATP-dependent protease ATPase subunit HslU (Acidovorax sp. (strain JS42)).